Here is a 1136-residue protein sequence, read N- to C-terminus: Unconventional myosin-Ib (1136 aa).

The Myosin motor domain occupies 15 to 701; sequence IGVGDTVLLE…TLFQLEDLRK (687 aa). Ser60 is subject to Phosphoserine. Residue 108-115 participates in ATP binding; sequence GESGAGKT. Lys287 participates in a covalent cross-link: Glycyl lysine isopeptide (Lys-Gly) (interchain with G-Cter in SUMO1); alternate. A Glycyl lysine isopeptide (Lys-Gly) (interchain with G-Cter in SUMO2); alternate cross-link involves residue Lys287. The interval 592 to 599 is actin-binding; sequence YIRCIKPN. 6 consecutive IQ domains span residues 704 to 729, 730 to 750, 750 to 778, 780 to 807, 808 to 837, and 837 to 866; these read LEDL…LMKR, SQVV…YQQI, IKSS…HQKR, KEAA…DEAR, NKHA…EARR, and RKHA…ANAG. Residues 952–1136 enclose the TH1 domain; sequence KALYPSSVGQ…NNRLLEVAVP (185 aa).

It belongs to the TRAFAC class myosin-kinesin ATPase superfamily. Myosin family.

Functionally, motor protein that may participate in process critical to neuronal development and function such as cell migration, neurite outgrowth and vesicular transport. The polypeptide is Unconventional myosin-Ib (Myo1b) (Rattus norvegicus (Rat)).